A 284-amino-acid chain; its full sequence is Tetraspanin-10 (284 aa).

The Cytoplasmic portion of the chain corresponds to 1–11 (MGMGTSTFVIR). The helical transmembrane segment at 12–32 (WVNLLTMLLAVAVIIFGVWMS) threads the bilayer. Topologically, residues 33 to 43 (THNDGCRRSLT) are extracellular. A helical transmembrane segment spans residues 44–64 (FPVIALGGFIFLISIIGFLGA). Over 65-75 (CKRSVALLWIY) the chain is Cytoplasmic. The helical transmembrane segment at 76–96 (LAVLLIVLIAILVFTVLAFIV) threads the bilayer. The Extracellular segment spans residues 97-228 (TNNGSGHTNP…AGVAQYMKTE (132 aa)). N-linked (GlcNAc...) asparagine glycosylation is found at Asn-99, Asn-128, and Asn-183. Residues 229-249 (WRLVAIFNVVLFVVLISSLLS) traverse the membrane as a helical segment. The Cytoplasmic segment spans residues 250-284 (TRFDSEQSFGLLNGLVQISNITFKDCQTTTVPKQF).

Belongs to the tetraspanin (TM4SF) family.

Its subcellular location is the membrane. Functionally, may be involved in the regulation of cell differentiation. The polypeptide is Tetraspanin-10 (TET10) (Arabidopsis thaliana (Mouse-ear cress)).